The sequence spans 481 residues: Glutamine synthetase (481 aa).

The GS beta-grasp domain maps to 22–106 (NEVEFVDFRF…VFCDVYDVYK (85 aa)). The GS catalytic domain occupies 114-481 (PRSIAKKALQ…PFEFITTYSC (368 aa)). Mg(2+) contacts are provided by Glu139, Glu141, Glu223, and Glu230. Residues 274–275 (NG) and Gly275 contribute to the L-glutamate site. His279 is a binding site for Mg(2+). ATP is bound by residues 281–283 (HVS) and Ser283. The L-glutamate site is built by Arg331, Glu337, and Arg349. The ATP site is built by Arg349 and Arg354. Residue Glu367 participates in Mg(2+) binding. An L-glutamate-binding site is contributed by Arg369.

The protein belongs to the glutamine synthetase family. Oligomer of 12 subunits arranged in the form of two hexameric ring. Mg(2+) serves as cofactor.

The protein resides in the cytoplasm. The catalysed reaction is L-glutamate + NH4(+) + ATP = L-glutamine + ADP + phosphate + H(+). Its activity is regulated as follows. The activity of this enzyme could be controlled by adenylation under conditions of abundant glutamine. In terms of biological role, catalyzes the ATP-dependent biosynthesis of glutamine from glutamate and ammonia. This is Glutamine synthetase from Helicobacter pylori (strain ATCC 700392 / 26695) (Campylobacter pylori).